The chain runs to 344 residues: MPMQGAQRKLLGSLNSTPTATSNPGLAANHTGAPCLEVSIPDGLFLSLGLVSLVENVLVVAAIAKNRNLHSSMYXFICCLALSDLLVSGSNMLETAIILLLEAGTLATRASVVQQLHNTIDVLTCSSMLCSLCFLGAIAVDRYISIFYALRYHSIMTLPRAQRAIAAIWVASVLSSTLFITYYDHAAVLLCLVVFFLAMLVLMAVLYVHMLARACQHAQGIIRLHNRQLPAHKGFGLRGAATLTILLGIFFLCWGPFFLHLTLVVFCPQHLTCNCIFKNFKVFLTLIICNTIIDPLIYAFRSQELRRTLKEVLLCSSWPGCWAEGGGDSVWPGSCVTLRGPLPP.

The Extracellular segment spans residues 1–37; that stretch reads MPMQGAQRKLLGSLNSTPTATSNPGLAANHTGAPCLE. Asn-29 carries an N-linked (GlcNAc...) asparagine glycan. Residues 38 to 63 form a helical membrane-spanning segment; that stretch reads VSIPDGLFLSLGLVSLVENVLVVAAI. The Cytoplasmic segment spans residues 64 to 72; sequence AKNRNLHSS. The chain crosses the membrane as a helical span at residues 73-93; sequence MYXFICCLALSDLLVSGSNML. Topologically, residues 94-118 are extracellular; the sequence is ETAIILLLEAGTLATRASVVQQLHN. Residues 119–140 traverse the membrane as a helical segment; the sequence is TIDVLTCSSMLCSLCFLGAIAV. Topologically, residues 141–163 are cytoplasmic; sequence DRYISIFYALRYHSIMTLPRAQR. A helical transmembrane segment spans residues 164 to 183; it reads AIAAIWVASVLSSTLFITYY. Residues 184–191 lie on the Extracellular side of the membrane; the sequence is DHAAVLLC. The chain crosses the membrane as a helical span at residues 192–211; that stretch reads LVVFFLAMLVLMAVLYVHML. Topologically, residues 212–240 are cytoplasmic; the sequence is ARACQHAQGIIRLHNRQLPAHKGFGLRGA. A helical transmembrane segment spans residues 241 to 266; that stretch reads ATLTILLGIFFLCWGPFFLHLTLVVF. Residues 267–279 lie on the Extracellular side of the membrane; it reads CPQHLTCNCIFKN. The chain crosses the membrane as a helical span at residues 280-300; the sequence is FKVFLTLIICNTIIDPLIYAF. At 301 to 344 the chain is on the cytoplasmic side; that stretch reads RSQELRRTLKEVLLCSSWPGCWAEGGGDSVWPGSCVTLRGPLPP. The S-palmitoyl cysteine moiety is linked to residue Cys-315.

It belongs to the G-protein coupled receptor 1 family. In terms of assembly, interacts with MGRN1, but does not undergo MGRN1-mediated ubiquitination; this interaction competes with GNAS-binding and thus inhibits agonist-induced cAMP production. Interacts with OPN3; the interaction results in a decrease in MC1R-mediated cAMP signaling and ultimately a decrease in melanin production in melanocytes.

The protein resides in the cell membrane. Its function is as follows. Receptor for MSH (alpha, beta and gamma) and ACTH. The activity of this receptor is mediated by G proteins which activate adenylate cyclase. Mediates melanogenesis, the production of eumelanin (black/brown) and phaeomelanin (red/yellow), via regulation of cAMP signaling in melanocytes. The protein is Melanocyte-stimulating hormone receptor (MC1R) of Callithrix geoffroyi (Geoffroy's marmoset).